The chain runs to 142 residues: Large ribosomal subunit protein bL17 (142 aa).

This sequence belongs to the bacterial ribosomal protein bL17 family. Part of the 50S ribosomal subunit. Contacts protein L32.

The polypeptide is Large ribosomal subunit protein bL17 (Wolbachia pipientis subsp. Culex pipiens (strain wPip)).